Consider the following 611-residue polypeptide: Menin (611 aa).

The segment at 214-390 (GVAERSWLYL…SLLETGEERT (177 aa)) is interaction with FANCD2. Residues 460–553 (REAEAAEAEE…SPPPEGPVLT (94 aa)) form a disordered region. A compositionally biased stretch (basic and acidic residues) spans 484-500 (RRESKPEEPPPPKKPAL). Phosphoserine occurs at positions 487 and 544. A Phosphothreonine modification is found at Thr595.

Component of the MLL-HCF complex, at least composed of KMT2A/MLL1, MEN1, ASH2L, RBBP5, DPY30, WDR5, HCFC1 and HCFC2. Component of the menin-associated histone methyltransferase complex, at least composed of KMT2B/MLL4, MEN1, ASH2L, RBBP5, DPY30 and WDR5. Interacts with POLR2B. Interacts with POLR2A phosphorylated at 'Ser-5', but not with the unphosphorylated, nor 'Ser-2' phosphorylated POLR2A forms. Interacts with FANCD2 and DBF4. Interacts with SMAD3, but not with SMAD2, nor SMAD4. Directly interacts with NFKB1, NFKB2 and RELA. Interacts with JUND (via MBM motif); inhibits the interaction of JUND with MAPK10 and the phosphorylation of JUND by MAP kinases MAPK8 and MAPK10. Interacts with KMT2A (via MBM motif). The KMT2A-MEN1 complex interacts with PSIP1 with a greater affinity as MEN1 enhances interaction of KMT2A with PSIP1. In terms of tissue distribution, widely expressed, with high levels in hippocampus, cerebral cortex, testis and thymus (at protein level). Also expressed at high levels in pancreatic islets, ovary and bone marrow. In the brain, highest expression in hippocampus pyramidal nerve cells (at protein level). In the testis, may be expressed in spermatogonia (at protein level). Low expression, if any, in skeletal muscle.

The protein resides in the nucleus. In terms of biological role, essential component of a MLL/SET1 histone methyltransferase (HMT) complex, a complex that specifically methylates 'Lys-4' of histone H3 (H3K4). Functions as a transcriptional regulator. Binds to the TERT promoter and represses telomerase expression. Plays a role in TGFB1-mediated inhibition of cell-proliferation, possibly regulating SMAD3 transcriptional activity. Represses JUND-mediated transcriptional activation on AP1 sites, as well as that mediated by NFKB subunit RELA. Positively regulates HOXC8 and HOXC6 gene expression. May be involved in normal hematopoiesis through the activation of HOXA9 expression. May be involved in DNA repair. The polypeptide is Menin (Men1) (Mus musculus (Mouse)).